The chain runs to 354 residues: Uroporphyrinogen decarboxylase (354 aa).

Residues 27–31, Asp77, Tyr154, Thr209, and His327 contribute to the substrate site; that span reads RQAGR.

The protein belongs to the uroporphyrinogen decarboxylase family. As to quaternary structure, homodimer.

It localises to the cytoplasm. It catalyses the reaction uroporphyrinogen III + 4 H(+) = coproporphyrinogen III + 4 CO2. Its pathway is porphyrin-containing compound metabolism; protoporphyrin-IX biosynthesis; coproporphyrinogen-III from 5-aminolevulinate: step 4/4. Its function is as follows. Catalyzes the decarboxylation of four acetate groups of uroporphyrinogen-III to yield coproporphyrinogen-III. The polypeptide is Uroporphyrinogen decarboxylase (Psychromonas ingrahamii (strain DSM 17664 / CCUG 51855 / 37)).